Reading from the N-terminus, the 765-residue chain is Palmitoyltransferase ZDHHC8 (765 aa).

The Cytoplasmic segment spans residues 1–13 (MPRSPGTRLKPAK). Residues 14 to 34 (YIPVATAAALLVGSSTLFFVF) form a helical membrane-spanning segment. The Lumenal portion of the chain corresponds to 35 to 52 (TCPWLTRAVSPAVPVYNG). Residues 53-73 (IIFLFVLANFSMATFMDPGVF) traverse the membrane as a helical segment. The Cytoplasmic segment spans residues 74–148 (PRADEDEDKE…NCIGRRNYRY (75 aa)). Positions 104–154 (KWCATCHFYRPPRCSHCSVCDNCVEDFDHHCPWVNNCIGRRNYRYFFLFLL) constitute a DHHC domain. The active-site S-palmitoyl cysteine intermediate is the Cys-134. Residues 149 to 169 (FFLFLLSLSAHMVGVVAFGLV) form a helical membrane-spanning segment. Over 170–190 (YVLNHAEGLGAAHTTITMAVM) the chain is Lumenal. The chain crosses the membrane as a helical span at residues 191-211 (CVAGLFFIPVIGLTGFHVVLV). Residues 212-765 (TRGRTTNEHV…VGGTTYEISV (554 aa)) lie on the Cytoplasmic side of the membrane. The tract at residues 290–386 (LKAGLGRSKS…PGPDSLTLGE (97 aa)) is disordered. The segment covering 301–311 (GSLDRLDEKPL) has biased composition (basic and acidic residues). A compositionally biased stretch (polar residues) spans 333–348 (PRPSSAESALSAQRTS). Phosphoserine is present on Ser-337. Arg-441 carries the post-translational modification Omega-N-methylarginine. A disordered region spans residues 447–542 (ALQPLRSEGG…PREPSPVRYD (96 aa)). Phosphoserine occurs at positions 606 and 627. A disordered region spans residues 630 to 747 (SLSSAVSRAP…PGPSASPARH (118 aa)). Residues 639–655 (PRTSSSSLQADLANNNA) are compositionally biased toward polar residues. The segment covering 671–680 (QGPPSPPSTP) has biased composition (pro residues). Phosphoserine is present on residues Ser-675, Ser-682, Ser-725, and Ser-743.

The protein belongs to the DHHC palmitoyltransferase family. ERF2/ZDHHC9 subfamily.

The protein resides in the golgi apparatus membrane. It localises to the mitochondrion membrane. The enzyme catalyses L-cysteinyl-[protein] + hexadecanoyl-CoA = S-hexadecanoyl-L-cysteinyl-[protein] + CoA. Functionally, palmitoyltransferase that catalyzes the addition of palmitate onto various protein substrates and therefore functions in several unrelated biological processes. Through the palmitoylation of ABCA1 regulates the localization of the transporter to the plasma membrane and thereby regulates its function in cholesterol and phospholipid efflux. Could also pamitoylate the D(2) dopamine receptor DRD2 and regulate its stability and localization to the plasma membrane. Could also play a role in glutamatergic transmission. This is Palmitoyltransferase ZDHHC8 from Canis lupus familiaris (Dog).